Consider the following 386-residue polypeptide: Succinate--CoA ligase [ADP-forming] subunit beta (386 aa).

The 236-residue stretch at 9–244 folds into the ATP-grasp domain; it reads KDLLTAYQLP…PSQENIRDVL (236 aa). ATP-binding positions include lysine 46, 53 to 55, valine 102, and glutamate 107; that span reads GRG. 2 residues coordinate Mg(2+): asparagine 199 and aspartate 213. Substrate contacts are provided by residues asparagine 264 and 321–323; that span reads GIM.

Belongs to the succinate/malate CoA ligase beta subunit family. Heterotetramer of two alpha and two beta subunits. The cofactor is Mg(2+).

It catalyses the reaction succinate + ATP + CoA = succinyl-CoA + ADP + phosphate. It carries out the reaction GTP + succinate + CoA = succinyl-CoA + GDP + phosphate. It participates in carbohydrate metabolism; tricarboxylic acid cycle; succinate from succinyl-CoA (ligase route): step 1/1. Succinyl-CoA synthetase functions in the citric acid cycle (TCA), coupling the hydrolysis of succinyl-CoA to the synthesis of either ATP or GTP and thus represents the only step of substrate-level phosphorylation in the TCA. The beta subunit provides nucleotide specificity of the enzyme and binds the substrate succinate, while the binding sites for coenzyme A and phosphate are found in the alpha subunit. This Chlamydia trachomatis serovar A (strain ATCC VR-571B / DSM 19440 / HAR-13) protein is Succinate--CoA ligase [ADP-forming] subunit beta.